The sequence spans 650 residues: tRNA-dihydrouridine(47) synthase [NAD(P)(+)]-like (650 aa).

Disordered regions lie at residues 1-24 (MAEG…GALE) and 46-120 (EAKG…NYDK). An N-acetylalanine modification is found at Ala-2. Composition is skewed to basic and acidic residues over residues 48–58 (KGQEKTCRETE) and 70–79 (PEAKRIRLED). Basic residues predominate over residues 101–113 (KRARGQNKGRPHV). 2 consecutive C3H1-type zinc fingers follow at residues 118-148 (YDKN…HDVG) and 156-186 (ADLG…HLRP). Positions 235-284 (FSQGPTPAAAVPEGTAAEGAPRQENCGAQQVPAGPGTSTPPSSPVRTCGP) are disordered. Position 236 is a phosphoserine (Ser-236). The residue at position 273 (Thr-273) is a Phosphothreonine. A phosphoserine mark is found at Ser-276 and Ser-277. FMN contacts are provided by residues 311–313 (PLT) and Gln-365. Cys-396 acts as the Proton donor in catalysis. Residue Lys-416 forms a Glycyl lysine isopeptide (Lys-Gly) (interchain with G-Cter in SUMO2) linkage. Residues Lys-435, His-465, 497–499 (NGD), and 520–521 (AR) each bind FMN.

It belongs to the Dus family. Dus3 subfamily. The cofactor is FMN.

It carries out the reaction 5,6-dihydrouridine(47) in tRNA + NAD(+) = uridine(47) in tRNA + NADH + H(+). The catalysed reaction is 5,6-dihydrouridine(47) in tRNA + NADP(+) = uridine(47) in tRNA + NADPH + H(+). The enzyme catalyses a 5,6-dihydrouridine in mRNA + NAD(+) = a uridine in mRNA + NADH + H(+). It catalyses the reaction a 5,6-dihydrouridine in mRNA + NADP(+) = a uridine in mRNA + NADPH + H(+). Catalyzes the synthesis of dihydrouridine, a modified base, in various RNAs, such as tRNAs, mRNAs and some long non-coding RNAs (lncRNAs). Mainly modifies the uridine in position 47 (U47) in the D-loop of most cytoplasmic tRNAs. Also able to mediate the formation of dihydrouridine in some mRNAs, thereby regulating their translation. The chain is tRNA-dihydrouridine(47) synthase [NAD(P)(+)]-like from Homo sapiens (Human).